Consider the following 455-residue polypeptide: Keratin, type I cuticular Ha5 (455 aa).

A head region spans residues 1 to 97 (MASKCLKAGF…FGEGILTGNE (97 aa)). The region spanning 97–408 (EKETMQSLND…GLLESEDSKL (312 aa)) is the IF rod domain. Residues 98–132 (KETMQSLNDRLAGYLEKVRQLEQENASLESRIREW) form a coil 1A region. A linker 1 region spans residues 133–143 (CEQQVPYMCPD). The interval 144 to 244 (YQSYFRTIEE…HEEEVNSLRC (101 aa)) is coil 1B. The interval 245–260 (QLGDRLNVEVDAAPPV) is linker 12. The tract at residues 261 to 404 (DLNRVLEEMR…NTYRGLLESE (144 aa)) is coil 2. Residues 405–455 (DSKLPCNPCAPDYSPSKSCLPCLPAASCGPSAARTNCSPRPICVPCPGGRF) form a tail region.

This sequence belongs to the intermediate filament family. In terms of tissue distribution, early expression in the hair follicle, mainly found in supramatricial cells and lowermost cortical cells of the hair bulb.

In Homo sapiens (Human), this protein is Keratin, type I cuticular Ha5 (KRT35).